The following is a 267-amino-acid chain: Putative transcription factor Ovo-like 1 (267 aa).

4 C2H2-type zinc fingers span residues 118-140 (FTCH…MKCH), 146-168 (HLCT…VRTH), 174-197 (YKCS…KKIH), and 213-236 (YVCE…KERH).

As to expression, expressed in skin, testis, kidney and weakly in lung. Not detected in heart, brain, spleen, liver and skeletal muscle.

The protein resides in the nucleus. Functionally, putative transcription factor. Involved in hair formation and spermatogenesis. May function in the differentiation and/or maintenance of the urogenital system. The polypeptide is Putative transcription factor Ovo-like 1 (Ovol1) (Mus musculus (Mouse)).